A 409-amino-acid polypeptide reads, in one-letter code: MPDDLLNSFMTGPDEKGRFGDFGGRFVSETLMPLILELEQQYEHAKTDDSFWAEMQDLWTHYVGRPSPLYFAKRLTERLGGAKIYLKRDELNHTGAHKINNVLGQIILARRMGKTRIIAETGAGQHGVATATVCAKFGLKCIVYMGATDVERQAPNVFRMKLLGAEVVPVTSGRGTLKDAMNDALRDWVTNVRDTFYCIGTVAGPHPYPAMVRDFQAIIGKETRDQMMAAEGRLPDTLIAAIGGGSNAMGLFFPFLDDKSVNIIGVEAGGHGVNEKMEHCASLTGGRPGVLHGNRTYLLQDEDGQILEGHSISAGLDYPGIGPEHAWLHEIGRAQYVSITDREALDAFQLSCETEGIIPALEPSHALAHVCKIAPDMPRDHLLVMNMCGRGDKDIFTVARALGWDMDGA.

Lysine 98 carries the post-translational modification N6-(pyridoxal phosphate)lysine.

The protein belongs to the TrpB family. As to quaternary structure, tetramer of two alpha and two beta chains. The cofactor is pyridoxal 5'-phosphate.

It catalyses the reaction (1S,2R)-1-C-(indol-3-yl)glycerol 3-phosphate + L-serine = D-glyceraldehyde 3-phosphate + L-tryptophan + H2O. Its pathway is amino-acid biosynthesis; L-tryptophan biosynthesis; L-tryptophan from chorismate: step 5/5. Its function is as follows. The beta subunit is responsible for the synthesis of L-tryptophan from indole and L-serine. The chain is Tryptophan synthase beta chain from Jannaschia sp. (strain CCS1).